A 423-amino-acid polypeptide reads, in one-letter code: ATP-dependent Clp protease ATP-binding subunit ClpX (423 aa).

Positions 1-50 (MTDDTEYRCSFCGKEHHQVDDLIAGPDVRICSECVVLSCEIVEDRRNEAL) constitute a ClpX-type ZB domain. Zn(2+) contacts are provided by C9, C12, C31, and C34. Residue 126 to 133 (PTGCGKTY) participates in ATP binding.

The protein belongs to the ClpX chaperone family. Component of the ClpX-ClpP complex. Forms a hexameric ring that, in the presence of ATP, binds to fourteen ClpP subunits assembled into a disk-like structure with a central cavity, resembling the structure of eukaryotic proteasomes.

Its function is as follows. ATP-dependent specificity component of the Clp protease. It directs the protease to specific substrates. Can perform chaperone functions in the absence of ClpP. The polypeptide is ATP-dependent Clp protease ATP-binding subunit ClpX (Tropheryma whipplei (strain TW08/27) (Whipple's bacillus)).